The chain runs to 120 residues: Secreted RxLR effector protein RXLR-C26 (120 aa).

The N-terminal stretch at 1-29 (MTGILCFPPFARFFMLLSGCAWLAGVSSG) is a signal peptide. A RxLR-dEER motif is present at residues 57-77 (RNLRGHINSAIIEANDTSEER). Asparagine 71 carries N-linked (GlcNAc...) asparagine glycosylation.

This sequence belongs to the RxLR effector family.

It is found in the secreted. The protein resides in the host cytoplasm. It localises to the host nucleus. Functionally, secreted effector that does not suppress pattern-triggered immunity (PTI) in plant host. The protein is Secreted RxLR effector protein RXLR-C26 of Plasmopara halstedii (Downy mildew of sunflower).